A 187-amino-acid chain; its full sequence is UPF0301 protein CT0663 (187 aa).

This sequence belongs to the UPF0301 (AlgH) family.

This Chlorobaculum tepidum (strain ATCC 49652 / DSM 12025 / NBRC 103806 / TLS) (Chlorobium tepidum) protein is UPF0301 protein CT0663.